Consider the following 170-residue polypeptide: Cathelicidin antimicrobial peptide (170 aa).

Positions 1 to 30 (MKTQRDGPSLGRWSLVLLLLGLVMPLAIVA) are cleaved as a signal peptide. The propeptide at 31 to 131 (QVLSYQEAVL…DISCDKDNRR (101 aa)) is cathelin-like domain (CLD). Cystine bridges form between C86–C97 and C108–C125. Positions 150-162 (LKKIGQKIKDFLG) are active core.

It belongs to the cathelicidin family. Monomer, homodimer or homotrimer (in vitro). Oligomerizes as tetra- or hexamer in solution (in vitro). Proteolytically cleaved by proteinase PRTN3 into antibacterial peptide LL-37. Proteolytically cleaved by cathepsin CTSG and neutrophil elastase ELANE. In terms of processing, resistant to proteolytic degradation in solution, and when bound to both zwitterionic (mimicking mammalian membranes) and negatively charged membranes (mimicking bacterial membranes). Post-translationally, after secretion onto the skin surface, the CAMP gene product is processed by a serine protease-dependent mechanism into multiple novel antimicrobial peptides distinct from and shorter than cathelicidin LL-37. These peptides show enhanced antimicrobial action, acquiring the ability to kill skin pathogens such as S.aureus, E.coli and C.albicans. These peptides have lost the ability to stimulate CXCL8/IL8 release from keratinocytes. The peptides act synergistically, killing bacteria at lower concentrations when present together, and maintain activity at increased salt condition.

It localises to the secreted. Its subcellular location is the vesicle. Its function is as follows. Antimicrobial protein that is an integral component of the innate immune system. Binds to bacterial lipopolysaccharides (LPS). Acts via neutrophil N-formyl peptide receptors to enhance the release of CXCL2. Postsecretory processing generates multiple cathelicidin antimicrobial peptides with various lengths which act as a topical antimicrobial defense in sweat on skin. The unprocessed precursor form, cathelicidin antimicrobial peptide, inhibits the growth of Gram-negative E.coli and E.aerogenes with efficiencies comparable to that of the mature peptide LL-37 (in vitro). Functionally, antimicrobial peptide that is an integral component of the innate immune system. Binds to bacterial lipopolysaccharides (LPS). Causes membrane permeabilization by forming transmembrane pores (in vitro). Causes lysis of E.coli. Exhibits antimicrobial activity against Gram-negative bacteria such as P.aeruginosa, S.typhimurium, E.aerogenes, E.coli and P.syringae, Gram-positive bacteria such as L.monocytogenes, S.epidermidis, S.pyogenes and S.aureus, as well as vancomycin-resistant enterococci (in vitro). Exhibits antimicrobial activity against methicillin-resistant S.aureus, P.mirabilis, and C.albicans in low-salt media, but not in media containing 100 mM NaCl (in vitro). Forms chiral supramolecular assemblies with quinolone signal (PQS) molecules of P.aeruginosa, which may lead to interference of bacterial quorum signaling and perturbance of bacterial biofilm formation. May form supramolecular fiber-like assemblies on bacterial membranes. Induces cytokine and chemokine producation as well as TNF/TNFA and CSF2/GMCSF production in normal human keratinocytes. Exhibits hemolytic activity against red blood cells. Exhibits antimicrobial activity against E.coli and B.megaterium (in vitro). The chain is Cathelicidin antimicrobial peptide from Chlorocebus aethiops (Green monkey).